Reading from the N-terminus, the 75-residue chain is Tautomerase PptA (75 aa).

Pro-2 functions as the Proton acceptor; via imino nitrogen in the catalytic mechanism.

Belongs to the 4-oxalocrotonate tautomerase family. PptA subfamily. In terms of assembly, homodimer.

The protein resides in the cytoplasm. In Escherichia coli O127:H6 (strain E2348/69 / EPEC), this protein is Tautomerase PptA.